Consider the following 164-residue polypeptide: MNVDFIAGINNLGEKIYTCEPFKTSFQNPFIVALIITAVVLVVFFAICNPPVDKKRKTKTAIYIYICIVALLFLHYYVLNHQLNDIYNKSNMDVIVSSIHDKYKGGDEIIPPVSPPSVPDELEEDRPKMIPAGSKPADFKPAEPAVSKPLIPLQEVIMPSQYNN.

The next 2 membrane-spanning stretches (helical) occupy residues 28–48 and 60–80; these read NPFIVALIITAVVLVVFFAIC and TAIYIYICIVALLFLHYYVLN. Asn88 carries an N-linked (GlcNAc...) asparagine; by host glycan. The tract at residues 114 to 142 is disordered; it reads SPPSVPDELEEDRPKMIPAGSKPADFKPA.

The protein belongs to the asfivirus B169L family.

The protein localises to the host membrane. Its subcellular location is the virion. The polypeptide is Transmembrane protein B169L (Ornithodoros (relapsing fever ticks)).